The chain runs to 138 residues: Putative pre-16S rRNA nuclease (138 aa).

It belongs to the YqgF nuclease family.

The protein localises to the cytoplasm. Could be a nuclease involved in processing of the 5'-end of pre-16S rRNA. The polypeptide is Putative pre-16S rRNA nuclease (Listeria monocytogenes serotype 4b (strain CLIP80459)).